The primary structure comprises 153 residues: Nuclear cap-binding protein subunit 2 (153 aa).

MRNA is bound by residues tyrosine 17, tyrosine 40, 109–113, 120–124, and 130–131; these read RTDWD, RQYGR, and QV. In terms of domain architecture, RRM spans 37-115; that stretch reads CTLYVGNLSF…RIIRTDWDAG (79 aa).

Belongs to the RRM NCBP2 family. As to quaternary structure, component of the nuclear cap-binding complex (CBC), a heterodimer composed of ncbp1/cbp80 and ncbp2/cbp20 that interacts with m7GpppG-capped RNA.

The protein resides in the nucleus. It localises to the cytoplasm. In terms of biological role, component of the cap-binding complex (CBC), which binds co-transcriptionally to the 5' cap of pre-mRNAs and is involved in various processes such as pre-mRNA splicing, translation regulation, nonsense-mediated mRNA decay, RNA-mediated gene silencing (RNAi) by microRNAs (miRNAs) and mRNA export. The CBC complex is involved in mRNA export from the nucleus, leading to the recruitment of the mRNA export machinery to the 5' end of mRNA and to mRNA export in a 5' to 3' direction through the nuclear pore. The CBC complex is also involved in mediating U snRNA and intronless mRNAs export from the nucleus. The CBC complex is essential for a pioneer round of mRNA translation, before steady state translation when the CBC complex is replaced by cytoplasmic cap-binding protein eIF4E. The pioneer round of mRNA translation mediated by the CBC complex plays a central role in nonsense-mediated mRNA decay (NMD), NMD only taking place in mRNAs bound to the CBC complex, but not on eIF4E-bound mRNAs. The CBC complex enhances NMD in mRNAs containing at least one exon-junction complex (EJC), promoting the interaction between upf1 and upf2. The CBC complex is also involved in 'failsafe' NMD, which is independent of the EJC complex, while it does not participate in Staufen-mediated mRNA decay (SMD). During cell proliferation, the CBC complex is also involved in microRNAs (miRNAs) biogenesis via its interaction with srrt/ars2, thereby being required for miRNA-mediated RNA interference. The CBC complex also acts as a negative regulator of parn, thereby acting as an inhibitor of mRNA deadenylation. In the CBC complex, ncbp2/cbp20 recognizes and binds capped RNAs (m7GpppG-capped RNA) but requires ncbp1/cbp80 to stabilize the movement of its N-terminal loop and lock the CBC into a high affinity cap-binding state with the cap structure. The conventional cap-binding complex with NCBP2 binds both small nuclear RNA (snRNA) and messenger (mRNA) and is involved in their export from the nucleus. The sequence is that of Nuclear cap-binding protein subunit 2 (ncbp2) from Xenopus tropicalis (Western clawed frog).